A 165-amino-acid polypeptide reads, in one-letter code: Sulfopyruvate decarboxylase subunit alpha (165 aa).

Belongs to the ComD family. As to quaternary structure, heterododecamer composed of 6 subunits alpha and 6 subunits beta.

The catalysed reaction is 3-sulfopyruvate + H(+) = sulfoacetaldehyde + CO2. It participates in cofactor biosynthesis; coenzyme M biosynthesis; sulfoacetaldehyde from phosphoenolpyruvate and sulfite: step 4/4. Functionally, involved in the biosynthesis of the coenzyme M (2-mercaptoethanesulfonic acid). Catalyzes the decarboxylation of sulfopyruvate to sulfoacetaldehyde. In Methanothermobacter thermautotrophicus (strain ATCC 29096 / DSM 1053 / JCM 10044 / NBRC 100330 / Delta H) (Methanobacterium thermoautotrophicum), this protein is Sulfopyruvate decarboxylase subunit alpha.